The sequence spans 294 residues: NAD kinase (294 aa).

The active-site Proton acceptor is Asp-74. NAD(+) contacts are provided by residues 74–75, Arg-79, 149–150, Asp-179, 190–195, and Ala-214; these read DG, NE, and TGYSMS.

Belongs to the NAD kinase family. It depends on a divalent metal cation as a cofactor.

The protein localises to the cytoplasm. It carries out the reaction NAD(+) + ATP = ADP + NADP(+) + H(+). In terms of biological role, involved in the regulation of the intracellular balance of NAD and NADP, and is a key enzyme in the biosynthesis of NADP. Catalyzes specifically the phosphorylation on 2'-hydroxyl of the adenosine moiety of NAD to yield NADP. This Flavobacterium psychrophilum (strain ATCC 49511 / DSM 21280 / CIP 103535 / JIP02/86) protein is NAD kinase.